Consider the following 716-residue polypeptide: 1,4-alpha-glucan branching enzyme GlgB (716 aa).

Residue aspartate 398 is the Nucleophile of the active site. Glutamate 451 (proton donor) is an active-site residue.

It belongs to the glycosyl hydrolase 13 family. GlgB subfamily. In terms of assembly, monomer.

It catalyses the reaction Transfers a segment of a (1-&gt;4)-alpha-D-glucan chain to a primary hydroxy group in a similar glucan chain.. The protein operates within glycan biosynthesis; glycogen biosynthesis. Catalyzes the formation of the alpha-1,6-glucosidic linkages in glycogen by scission of a 1,4-alpha-linked oligosaccharide from growing alpha-1,4-glucan chains and the subsequent attachment of the oligosaccharide to the alpha-1,6 position. The chain is 1,4-alpha-glucan branching enzyme GlgB from Nitrobacter winogradskyi (strain ATCC 25391 / DSM 10237 / CIP 104748 / NCIMB 11846 / Nb-255).